The sequence spans 107 residues: Ornithine carbamoyltransferase, catabolic (107 aa).

Carbamoyl phosphate is bound by residues 57–61 and Q84; that span reads STRTR.

It belongs to the aspartate/ornithine carbamoyltransferase superfamily. OTCase family.

Its subcellular location is the cytoplasm. It carries out the reaction carbamoyl phosphate + L-ornithine = L-citrulline + phosphate + H(+). It functions in the pathway amino-acid degradation; L-arginine degradation via ADI pathway; carbamoyl phosphate from L-arginine: step 2/2. This is Ornithine carbamoyltransferase, catabolic (arcB) from Streptococcus pyogenes.